Here is a 2161-residue protein sequence, read N- to C-terminus: Voltage-dependent L-type calcium channel subunit alpha-1D (2161 aa).

3 disordered regions span residues 1 to 21, 30 to 49, and 64 to 100; these read MMMM…ADHA, TRLP…SKQT, and KAAQ…SSNS. Residues 1–126 are Cytoplasmic-facing; sequence MMMMMMMKKM…RACISIVEWK (126 aa). Positions 38–49 are enriched in polar residues; sequence GPTSQPNSSKQT. Basic residues predominate over residues 82–93; sequence QRKRQQYAKSKK. One copy of the I repeat lies at 113 to 409; sequence NPIRRACISI…LVLGVLSGEF (297 aa). A helical membrane pass occupies residues 127 to 145; the sequence is PFDIFILLAIFANCVALAI. Topologically, residues 146–163 are extracellular; it reads YIPFPEDDSNSTNHNLEK. Residue Asn-155 is glycosylated (N-linked (GlcNAc...) asparagine). Residues 164-183 traverse the membrane as a helical segment; sequence VEYAFLIIFTVETFLKIIAY. The Cytoplasmic segment spans residues 184 to 195; it reads GLLLHPNAYVRN. Residues 196 to 214 traverse the membrane as a helical segment; that stretch reads GWNLLDFVIVIVGLFSVIL. Topologically, residues 215–235 are extracellular; the sequence is EQLTKETEGGNHSSGKSGGFD. Asn-225 is a glycosylation site (N-linked (GlcNAc...) asparagine). Residues 236 to 254 form a helical membrane-spanning segment; it reads VKALRAFRVLRPLRLVSGV. The Cytoplasmic portion of the chain corresponds to 255–273; it reads PSLQVVLNSIIKAMVPLLH. A helical transmembrane segment spans residues 274-293; it reads IALLVLFVIIIYAIIGLELF. At 294–381 the chain is on the extracellular side; sequence IGKMHKTCFF…WMNDAMGFEL (88 aa). Asn-329 is a glycosylation site (N-linked (GlcNAc...) asparagine). Glu-364 contributes to the Ca(2+) binding site. The chain crosses the membrane as a helical span at residues 382–406; it reads PWVYFVSLVIFGSFFVLNLVLGVLS. Topologically, residues 407 to 523 are cytoplasmic; that stretch reads GEFSKEREKA…RRCRAAVKSV (117 aa). The binding to the beta subunit stretch occupies residues 429 to 446; sequence QQLEEDLKGYLDWITQAE. The segment at 449 to 482 is disordered; it reads DPENEEEGGEEGKRNTSMPTSETESVNTENVSGE. Polar residues predominate over residues 463 to 479; it reads NTSMPTSETESVNTENV. An II repeat occupies 509–755; it reads NRFNRRRCRA…VFLAIAVDNL (247 aa). The helical transmembrane segment at 524–543 threads the bilayer; it reads TFYWLVIVLVFLNTLTISSE. The Extracellular segment spans residues 544–558; it reads HYNQPDWLTQIQDIA. A helical membrane pass occupies residues 559 to 577; it reads NKVLLALFTCEMLVKMYSL. The Cytoplasmic portion of the chain corresponds to 578–585; sequence GLQAYFVS. The helical transmembrane segment at 586 to 604 threads the bilayer; the sequence is LFNRFDCFVVCGGITETIL. Residues 605–614 are Extracellular-facing; sequence VELEIMSPLG. Residues 615–633 traverse the membrane as a helical segment; the sequence is ISVFRCVRLLRIFKVTRHW. Topologically, residues 634–652 are cytoplasmic; sequence TSLSNLVASLLNSMKSIAS. The helical transmembrane segment at 653–673 threads the bilayer; the sequence is LLLLLFLFIIIFSLLGMQLFG. Topologically, residues 674 to 727 are extracellular; sequence GKFNFDETQTKRSTFDNFPQALLTVFQILTGEDWNAVMYDGIMAYGGPSSSGMI. Residue Glu-705 participates in Ca(2+) binding. A helical membrane pass occupies residues 728–752; the sequence is VCIYFIILFICGNYILLNVFLAIAV. The Cytoplasmic portion of the chain corresponds to 753-886; sequence DNLADAESLN…VGCHKLINHH (134 aa). The segment covering 766–790 has biased composition (basic and acidic residues); sequence KEEAEEKERKKIARKESLENKKNNK. Positions 766 to 850 are disordered; the sequence is KEEAEEKERK…AGPRPRRISE (85 aa). The span at 791-802 shows a compositional bias: polar residues; the sequence is PEVNQIANSDNK. Residues 825–838 show a composition bias toward acidic residues; the sequence is VGEEEEEEEEDEPE. The III repeat unit spans residues 873-1155; that stretch reads NPIRVGCHKL…IFVGFVIVTF (283 aa). A helical membrane pass occupies residues 887–905; that stretch reads IFTNLILVFIMLSSAALAA. Residues 906-921 lie on the Extracellular side of the membrane; the sequence is EDPIRSHSFRNTILGY. The chain crosses the membrane as a helical span at residues 922–941; it reads FDYAFTAIFTVEILLKMTTF. At 942–953 the chain is on the cytoplasmic side; it reads GAFLHKGAFCRN. A helical membrane pass occupies residues 954–972; it reads YFNLLDMLVVGVSLVSFGI. The Extracellular segment spans residues 973 to 978; it reads QSSAIS. Residues 979–998 form a helical membrane-spanning segment; the sequence is VVKILRVLRVLRPLRAINRA. Over 999–1017 the chain is Cytoplasmic; that stretch reads KGLKHVVQCVFVAIRTIGN. The chain crosses the membrane as a helical span at residues 1018 to 1037; it reads IMIVTTLLQFMFACIGVQLF. Topologically, residues 1038–1127 are extracellular; the sequence is KGKFYRCTDE…IGPIYNHRVE (90 aa). Positions 1075–1165 are dihydropyridine binding; it reads RIWQNSDFNF…QEQGEKEYKN (91 aa). Glu-1101 provides a ligand contact to Ca(2+). The helical transmembrane segment at 1128–1148 threads the bilayer; sequence ISIFFIIYIIIVAFFMMNIFV. Residues 1149 to 1205 are Cytoplasmic-facing; it reads GFVIVTFQEQGEKEYKNCELDKNQRQCVEYALKARPLRRYIPKNPYQYKFWYVVNSS. One copy of the IV repeat lies at 1192–1467; the sequence is NPYQYKFWYV…LFVAVIMDNF (276 aa). A helical membrane pass occupies residues 1206 to 1224; the sequence is PFEYMMFVLIMLNTLCLAM. At 1225 to 1239 the chain is on the extracellular side; sequence QHYEQSKMFNDAMDI. Residues 1240 to 1259 form a helical membrane-spanning segment; sequence LNMVFTGVFTVEMVLKVIAF. Topologically, residues 1260 to 1266 are cytoplasmic; it reads KPKGYFS. The helical transmembrane segment at 1267-1288 threads the bilayer; sequence DAWNTFDSLIVIGSIIDVALSE. Residues 1289-1313 lie on the Extracellular side of the membrane; sequence ADPTESENVPVPTATPGNSEESNRI. A helical transmembrane segment spans residues 1314 to 1333; sequence SITFFRLFRVMRLVKLLSRG. The Cytoplasmic segment spans residues 1334–1352; the sequence is EGIRTLLWTFIKSFQALPY. A helical transmembrane segment spans residues 1353-1372; it reads VALLIAMLFFIYAVIGMQMF. The Extracellular segment spans residues 1373–1439; sequence GKVAMRDNNQ…GEEYTCGSNF (67 aa). The interval 1420–1486 is dihydropyridine binding; that stretch reads LCDPESDYNP…LGPHHLDEFK (67 aa). The interval 1432–1475 is phenylalkylamine binding; that stretch reads EYTCGSNFAIVYFISFYMLCAFLIINLFVAVIMDNFDYLTRDWS. Residues 1440 to 1464 traverse the membrane as a helical segment; that stretch reads AIVYFISFYMLCAFLIINLFVAVIM. Over 1465–2161 the chain is Cytoplasmic; that stretch reads DNFDYLTRDW…ADEMICITTL (697 aa). Disordered regions lie at residues 1659 to 1678, 1684 to 1804, 1872 to 1919, and 2108 to 2152; these read SCDL…EDDV, ALLG…VKRT, PGRN…ASHR, and NGNV…EDLA. The segment covering 1745–1763 has biased composition (polar residues); that stretch reads SIGKQVPTSTNANLNNANM. The span at 1779 to 1797 shows a compositional bias: basic and acidic residues; that stretch reads HVSENGHHSSHKHDREPQR. Residues 2138 to 2152 are compositionally biased toward acidic residues; sequence SDEEPDPGRDEEDLA.

The protein belongs to the calcium channel alpha-1 subunit (TC 1.A.1.11) family. CACNA1D subfamily. Voltage-dependent calcium channels are multisubunit complexes, consisting of alpha-1, alpha-2, beta and delta subunits in a 1:1:1:1 ratio. The channel activity is directed by the pore-forming and voltage-sensitive alpha-1 subunit. In many cases, this subunit is sufficient to generate voltage-sensitive calcium channel activity. The auxiliary subunits beta and alpha-2/delta linked by a disulfide bridge regulate the channel activity. Channel activity is further modulated, depending on the presence of specific delta subunit isoforms. Interacts (via IQ domain) with CABP1 and CABP4 in a calcium independent manner. Interacts with RIMBP2. Expressed in pancreatic islets and in brain, where it has been seen in cerebral cortex, hippocampus, basal ganglia, habenula and thalamus. Expressed in the small cell lung carcinoma cell line SCC-9. No expression in skeletal muscle.

The protein localises to the membrane. The catalysed reaction is Ca(2+)(in) = Ca(2+)(out). Its function is as follows. Voltage-sensitive calcium channels (VSCC) mediate the entry of calcium ions into excitable cells and are also involved in a variety of calcium-dependent processes, including muscle contraction, hormone or neurotransmitter release, gene expression, cell motility, cell division and cell death. The isoform alpha-1D gives rise to L-type calcium currents. Long-lasting (L-type) calcium channels belong to the 'high-voltage activated' (HVA) group. They are blocked by dihydropyridines (DHP), phenylalkylamines, and by benzothiazepines. In terms of biological role, voltage-sensitive calcium channels (VSCC) mediate the entry of calcium ions into excitable cells and are also involved in a variety of calcium-dependent processes, including muscle contraction, hormone or neurotransmitter release, gene expression, cell motility, cell division and cell death. The isoform alpha-1D gives rise to L-type calcium currents. The polypeptide is Voltage-dependent L-type calcium channel subunit alpha-1D (CACNA1D) (Homo sapiens (Human)).